The chain runs to 217 residues: Pyrophosphatase PpaX (217 aa).

Asp-11 serves as the catalytic Nucleophile.

Belongs to the HAD-like hydrolase superfamily. PpaX family. It depends on Mg(2+) as a cofactor.

The catalysed reaction is diphosphate + H2O = 2 phosphate + H(+). Hydrolyzes pyrophosphate formed during P-Ser-HPr dephosphorylation by HPrK/P. Might play a role in controlling the intracellular pyrophosphate pool. The chain is Pyrophosphatase PpaX from Listeria monocytogenes serotype 4b (strain CLIP80459).